Here is a 373-residue protein sequence, read N- to C-terminus: tRNA 2-selenouridine synthase (373 aa).

One can recognise a Rhodanese domain in the interval 12–136 (FINDRPMMDA…MRGFLLETTE (125 aa)). The S-selanylcysteine intermediate role is filled by cysteine 95.

Belongs to the SelU family. As to quaternary structure, monomer.

It catalyses the reaction 5-methylaminomethyl-2-thiouridine(34) in tRNA + selenophosphate + (2E)-geranyl diphosphate + H2O + H(+) = 5-methylaminomethyl-2-selenouridine(34) in tRNA + (2E)-thiogeraniol + phosphate + diphosphate. The catalysed reaction is 5-methylaminomethyl-2-thiouridine(34) in tRNA + (2E)-geranyl diphosphate = 5-methylaminomethyl-S-(2E)-geranyl-thiouridine(34) in tRNA + diphosphate. The enzyme catalyses 5-methylaminomethyl-S-(2E)-geranyl-thiouridine(34) in tRNA + selenophosphate + H(+) = 5-methylaminomethyl-2-(Se-phospho)selenouridine(34) in tRNA + (2E)-thiogeraniol. It carries out the reaction 5-methylaminomethyl-2-(Se-phospho)selenouridine(34) in tRNA + H2O = 5-methylaminomethyl-2-selenouridine(34) in tRNA + phosphate. In terms of biological role, involved in the post-transcriptional modification of the uridine at the wobble position (U34) of tRNA(Lys), tRNA(Glu) and tRNA(Gln). Catalyzes the conversion of 2-thiouridine (S2U-RNA) to 2-selenouridine (Se2U-RNA). Acts in a two-step process involving geranylation of 2-thiouridine (S2U) to S-geranyl-2-thiouridine (geS2U) and subsequent selenation of the latter derivative to 2-selenouridine (Se2U) in the tRNA chain. The protein is tRNA 2-selenouridine synthase of Ectopseudomonas mendocina (strain ymp) (Pseudomonas mendocina).